We begin with the raw amino-acid sequence, 353 residues long: MTAILERRETESLWGRFCNWITSTENRLYIGWFGVLMIPTLLTATSVFIIAFIAAPPVDIDGIREPVSGSLLYGNNIISGAIIPTSAAIGLHFYPIWEAASVDEWLYNGGPYELIVLHFLLGVACYMGREWELSFRLGMRPWIAVAYSAPVAAATAVFLIYPIGQGSFSDGMPLGISGTFNFMIVFQAEHNILMHPFHMLGVAGVFGGSLFSAMHGSLVTSSLIRETTENESANEGYRFGQEEETYNIVAAHGYFGRLIFQYASFNNSRSLHFFLAAWPVVGIWFTALGISTMAFNLNGFNFNQSVVDSQGRVINTWADIINRANLGMEVMHERNAHNFPLDLAAVEAPSTNG.

Thr-2 is subject to N-acetylthreonine. Thr-2 bears the Phosphothreonine mark. 3 helical membrane passes run 29-46 (YIGW…TATS), 118-133 (HFLL…EWEL), and 142-156 (WIAV…AATA). Residue His-118 participates in chlorophyll a binding. Tyr-126 lines the pheophytin a pocket. [CaMn4O5] cluster contacts are provided by Asp-170 and Glu-189. The helical transmembrane segment at 197 to 218 (FHMLGVAGVFGGSLFSAMHGSL) threads the bilayer. Residue His-198 participates in chlorophyll a binding. A quinone contacts are provided by residues His-215 and 264–265 (SF). His-215 contributes to the Fe cation binding site. His-272 provides a ligand contact to Fe cation. Residues 274-288 (FLAAWPVVGIWFTAL) form a helical membrane-spanning segment. The [CaMn4O5] cluster site is built by His-332, Glu-333, Asp-342, and Ala-344. Residues 345–353 (AVEAPSTNG) constitute a propeptide that is removed on maturation.

The protein belongs to the reaction center PufL/M/PsbA/D family. In terms of assembly, PSII is composed of 1 copy each of membrane proteins PsbA, PsbB, PsbC, PsbD, PsbE, PsbF, PsbH, PsbI, PsbJ, PsbK, PsbL, PsbM, PsbT, PsbX, PsbY, PsbZ, Psb30/Ycf12, at least 3 peripheral proteins of the oxygen-evolving complex and a large number of cofactors. It forms dimeric complexes. The D1/D2 heterodimer binds P680, chlorophylls that are the primary electron donor of PSII, and subsequent electron acceptors. It shares a non-heme iron and each subunit binds pheophytin, quinone, additional chlorophylls, carotenoids and lipids. D1 provides most of the ligands for the Mn4-Ca-O5 cluster of the oxygen-evolving complex (OEC). There is also a Cl(-1) ion associated with D1 and D2, which is required for oxygen evolution. The PSII complex binds additional chlorophylls, carotenoids and specific lipids. serves as cofactor. In terms of processing, tyr-161 forms a radical intermediate that is referred to as redox-active TyrZ, YZ or Y-Z. C-terminally processed by CTPA; processing is essential to allow assembly of the oxygen-evolving complex and thus photosynthetic growth.

It is found in the plastid. The protein localises to the chloroplast thylakoid membrane. It carries out the reaction 2 a plastoquinone + 4 hnu + 2 H2O = 2 a plastoquinol + O2. Photosystem II (PSII) is a light-driven water:plastoquinone oxidoreductase that uses light energy to abstract electrons from H(2)O, generating O(2) and a proton gradient subsequently used for ATP formation. It consists of a core antenna complex that captures photons, and an electron transfer chain that converts photonic excitation into a charge separation. The D1/D2 (PsbA/PsbD) reaction center heterodimer binds P680, the primary electron donor of PSII as well as several subsequent electron acceptors. In Lepidium virginicum (Virginia pepperweed), this protein is Photosystem II protein D1.